Consider the following 541-residue polypeptide: Chaperonin GroEL (541 aa).

ATP-binding positions include 29-32 (TLGP), 86-90 (DGTTT), Gly-413, 478-480 (NAL), and Asp-494.

This sequence belongs to the chaperonin (HSP60) family. Forms a cylinder of 14 subunits composed of two heptameric rings stacked back-to-back. Interacts with the co-chaperonin GroES.

It is found in the cytoplasm. The enzyme catalyses ATP + H2O + a folded polypeptide = ADP + phosphate + an unfolded polypeptide.. In terms of biological role, together with its co-chaperonin GroES, plays an essential role in assisting protein folding. The GroEL-GroES system forms a nano-cage that allows encapsulation of the non-native substrate proteins and provides a physical environment optimized to promote and accelerate protein folding. This chain is Chaperonin GroEL, found in Lachnoclostridium phytofermentans (strain ATCC 700394 / DSM 18823 / ISDg) (Clostridium phytofermentans).